A 229-amino-acid polypeptide reads, in one-letter code: Peptidase E (229 aa).

Active-site charge relay system residues include Ser-120, Asp-135, and His-157.

This sequence belongs to the peptidase S51 family.

It localises to the cytoplasm. The enzyme catalyses Dipeptidase E catalyzes the hydrolysis of dipeptides Asp-|-Xaa. It does not act on peptides with N-terminal Glu, Asn or Gln, nor does it cleave isoaspartyl peptides.. In terms of biological role, hydrolyzes dipeptides containing N-terminal aspartate residues. May play a role in allowing the cell to use peptide aspartate to spare carbon otherwise required for the synthesis of the aspartate family of amino acids. The sequence is that of Peptidase E from Salmonella typhi.